An 82-amino-acid polypeptide reads, in one-letter code: uncharacterized protein (82 aa).

Positions 1-82 constitute a 2Fe-2S ferredoxin-type domain; that stretch reads MKIHLIRHNT…HVESDIEIDL (82 aa). The [2Fe-2S] cluster site is built by Cys-35, Cys-40, Cys-43, and Cys-72.

[2Fe-2S] cluster is required as a cofactor.

This is an uncharacterized protein from Haemophilus influenzae (strain ATCC 51907 / DSM 11121 / KW20 / Rd).